We begin with the raw amino-acid sequence, 1448 residues long: ABC transporter G family member 9 (1448 aa).

Over residues 16–28 (EGGSNLNINTPSG) the composition is skewed to polar residues. The tract at residues 16–41 (EGGSNLNINTPSGMSDGDFNSGANSP) is disordered. The region spanning 136 to 385 (LFKPSTWKIE…FLDLGFDCEP (250 aa)) is the ABC transporter 1 domain. The region spanning 490 to 717 (WGDKFSLVSR…APYDNSVRVC (228 aa)) is the ABC transmembrane type-2 1 domain. 7 helical membrane-spanning segments follow: residues 494–514 (FSLV…GSVF), 530–550 (AIFA…FATF), 579–599 (IPLT…MFGL), 604–624 (GKFF…TNMF), 634–654 (LYVS…YCGY), 663–683 (PWFG…ALMA), and 748–768 (LNIF…MVAV). The region spanning 822–1066 (FTWENIKYTV…LTSYFERQGV (245 aa)) is the ABC transporter 2 domain. 858–865 (GSSGAGKT) lines the ATP pocket. A run of 6 helical transmembrane segments spans residues 1157–1177 (FYAY…GFTF), 1191–1211 (IFFI…VMVQ), 1233–1253 (FAIS…SVFF), 1272–1292 (FYFW…GGAI), 1299–1319 (MFLA…FCGV), and 1422–1442 (IAIL…FVYL). Residues 1157–1389 (FYAYGSILQA…VPATGYVTNT (233 aa)) enclose the ABC transmembrane type-2 2 domain.

It belongs to the ABC transporter superfamily. ABCG family. PDR (TC 3.A.1.205) subfamily.

Its subcellular location is the membrane. The chain is ABC transporter G family member 9 (abcG9) from Dictyostelium discoideum (Social amoeba).